The chain runs to 660 residues: Protein FAM161A (660 aa).

Coiled coils occupy residues 93–120 and 296–320; these read EEYF…YQDK and YHDL…ALLA. The segment at 341-525 is required for interaction with CFAP418; sequence QLRDFLKYKK…PTVSSRGREQ (185 aa). Glycyl lysine isopeptide (Lys-Gly) (interchain with G-Cter in SUMO2) cross-links involve residues Lys-468 and Lys-484. The stretch at 522-552 forms a coiled coil; sequence GREQAVRKSEKERMREYQRELEEREEKLKKR. The tract at residues 605-660 is disordered; it reads KSVTEDKESFNEEEKIEERENGEENYFIDTNSQDSYKEKDEANEESEEEKSVEESH. Basic and acidic residues predominate over residues 606-623; the sequence is SVTEDKESFNEEEKIEER. Residues 645 to 660 are compositionally biased toward acidic residues; that stretch reads EANEESEEEKSVEESH.

This sequence belongs to the FAM161 family. In terms of assembly, interacts (via central region) with CFAP418 (via N-terminus); the interaction is direct. Interacts (via C-terminus) with microtubules. Interacts with LCA5. Interacts with CEP290. Interacts with SDCCAG8. Interacts with FAM161B. Interacts with POC1B. Interacts with CEP78. Forms a microtubule-associated complex with POC5, CETN2 and POC1B. Interacts with CCDC15. As to expression, isoform 1 and isoform 3 are widely expressed with highest levels in retina and testis, with isoform 1 being the most abundant in all tissues tested.

It localises to the cytoplasm. The protein resides in the cytoskeleton. It is found in the cilium basal body. Its subcellular location is the cell projection. The protein localises to the cilium. It localises to the microtubule organizing center. The protein resides in the centrosome. It is found in the centriole. Involved in ciliogenesis. The protein is Protein FAM161A (FAM161A) of Homo sapiens (Human).